A 195-amino-acid chain; its full sequence is Small ribosomal subunit protein uS5 (195 aa).

Residues 22–85 (IVEKLVHINR…EEAKKSMIRV (64 aa)) form the S5 DRBM domain. The interval 164 to 195 (QVAAKRGKKVSDVIGRRADGASAAQPAADAEG) is disordered. Over residues 172–182 (KVSDVIGRRAD) the composition is skewed to basic and acidic residues. Residues 183-195 (GASAAQPAADAEG) show a composition bias toward low complexity.

The protein belongs to the universal ribosomal protein uS5 family. In terms of assembly, part of the 30S ribosomal subunit. Contacts proteins S4 and S8.

With S4 and S12 plays an important role in translational accuracy. In terms of biological role, located at the back of the 30S subunit body where it stabilizes the conformation of the head with respect to the body. This Phenylobacterium zucineum (strain HLK1) protein is Small ribosomal subunit protein uS5.